A 639-amino-acid chain; its full sequence is CTTNBP2 N-terminal-like protein (639 aa).

Positions 87-285 form a coiled coil; it reads MKQCKNMQER…DLEASHQHSS (199 aa). 2 positions are modified to phosphoserine: Ser-284 and Ser-285. Disordered stretches follow at residues 387-430, 463-490, and 511-609; these read VENG…PCSS, RHKF…LSPT, and RFTS…AASL. 2 stretches are compositionally biased toward low complexity: residues 407-430 and 467-477; these read PSSG…PCSS and QSQADQDQQAS. A phosphoserine mark is found at Ser-481, Ser-488, Ser-523, Ser-527, Ser-560, Ser-563, and Ser-568. Positions 511 to 529 are enriched in polar residues; it reads RFTSQQGPIKPVSPNSSPF. Thr-570 and Thr-590 each carry phosphothreonine. The span at 587–600 shows a compositional bias: low complexity; sequence PGLTPSPSATTPLT. The residue at position 592 (Ser-592) is a Phosphoserine.

As to quaternary structure, interacts with CTTN/cortactin; this interaction may redistribute CTTN to stress fibers. May form homomers. Associates with the core of STRIPAK complexes composed of PP2A catalytic and scaffolding subunits, the striatins (PP2A regulatory subunits), the striatin-associated proteins MOB4, STRIP1 and STRIP2, PDCD10 and members of the STE20 kinases, such as STK24 and STK26.

The protein resides in the cell projection. The protein localises to the lamellipodium. It localises to the cytoplasm. It is found in the cytoskeleton. Its subcellular location is the stress fiber. In terms of biological role, regulates lamellipodial actin dynamics in a CTTN-dependent manner. Associates with core striatin-interacting phosphatase and kinase (STRIPAK) complex to form CTTNBP2NL-STRIPAK complexes. STRIPAK complexes have critical roles in protein (de)phosphorylation and are regulators of multiple signaling pathways including Hippo, MAPK, nuclear receptor and cytoskeleton remodeling. Different types of STRIPAK complexes are involved in a variety of biological processes such as cell growth, differentiation, apoptosis, metabolism and immune regulation. The protein is CTTNBP2 N-terminal-like protein (CTTNBP2NL) of Pongo abelii (Sumatran orangutan).